The chain runs to 595 residues: Phosphomethylpyrimidine synthase (595 aa).

Basic and acidic residues predominate over residues 97-120; sequence GRDVRPEDNGFTKDDDPRAAREVF. A disordered region spans residues 97–134; sequence GRDVRPEDNGFTKDDDPRAAREVFPRTSSHKPLRAKKG. Positions 124-133 are enriched in basic residues; that stretch reads SSHKPLRAKK. Residues Asn-202, Met-231, Tyr-260, His-296, 316–318, 357–360, and Glu-396 contribute to the substrate site; these read SRG and DGLR. Residue His-400 coordinates Zn(2+). Tyr-423 is a substrate binding site. His-464 contributes to the Zn(2+) binding site. [4Fe-4S] cluster contacts are provided by Cys-544, Cys-547, and Cys-552.

This sequence belongs to the ThiC family. It depends on [4Fe-4S] cluster as a cofactor.

It catalyses the reaction 5-amino-1-(5-phospho-beta-D-ribosyl)imidazole + S-adenosyl-L-methionine = 4-amino-2-methyl-5-(phosphooxymethyl)pyrimidine + CO + 5'-deoxyadenosine + formate + L-methionine + 3 H(+). Its pathway is cofactor biosynthesis; thiamine diphosphate biosynthesis. Catalyzes the synthesis of the hydroxymethylpyrimidine phosphate (HMP-P) moiety of thiamine from aminoimidazole ribotide (AIR) in a radical S-adenosyl-L-methionine (SAM)-dependent reaction. This is Phosphomethylpyrimidine synthase from Halalkalibacterium halodurans (strain ATCC BAA-125 / DSM 18197 / FERM 7344 / JCM 9153 / C-125) (Bacillus halodurans).